Reading from the N-terminus, the 140-residue chain is Large ribosomal subunit protein bL34m (140 aa).

This sequence belongs to the bacterial ribosomal protein bL34 family. In terms of assembly, component of the mitochondrial large ribosomal subunit (mt-LSU). Mature N.crassa 74S mitochondrial ribosomes consist of a small (37S) and a large (54S) subunit. The 37S small subunit contains a 16S ribosomal RNA (16S mt-rRNA) and 32 different proteins. The 54S large subunit contains a 23S rRNA (23S mt-rRNA) and 42 different proteins.

The protein localises to the mitochondrion. Its function is as follows. Component of the mitochondrial ribosome (mitoribosome), a dedicated translation machinery responsible for the synthesis of mitochondrial genome-encoded proteins, including at least some of the essential transmembrane subunits of the mitochondrial respiratory chain. The mitoribosomes are attached to the mitochondrial inner membrane and translation products are cotranslationally integrated into the membrane. In Neurospora crassa (strain ATCC 24698 / 74-OR23-1A / CBS 708.71 / DSM 1257 / FGSC 987), this protein is Large ribosomal subunit protein bL34m (mrpl34).